A 386-amino-acid chain; its full sequence is Antilisterial bacteriocin subtilosin biosynthesis protein AlbE (386 aa).

Its function is as follows. Involved in the production of the bacteriocin subtilosin. In Bacillus subtilis, this protein is Antilisterial bacteriocin subtilosin biosynthesis protein AlbE (albE).